Reading from the N-terminus, the 221-residue chain is Probable GTP-binding protein EngB (221 aa).

An EngB-type G domain is found at 37 to 219 (QGIEIALAGR…RAAIVKLLRE (183 aa)). GTP-binding positions include 45–52 (GRSNVGKS), 72–76 (GRTQE), 97–100 (DMPG), 164–167 (TKTD), and 198–200 (TSS). Residues Ser-52 and Thr-74 each coordinate Mg(2+).

This sequence belongs to the TRAFAC class TrmE-Era-EngA-EngB-Septin-like GTPase superfamily. EngB GTPase family. Mg(2+) is required as a cofactor.

Its function is as follows. Necessary for normal cell division and for the maintenance of normal septation. In Afipia carboxidovorans (strain ATCC 49405 / DSM 1227 / KCTC 32145 / OM5) (Oligotropha carboxidovorans), this protein is Probable GTP-binding protein EngB.